A 75-amino-acid chain; its full sequence is Putative antitoxin VapB29 (75 aa).

In terms of biological role, possibly the antitoxic component of a type II toxin-antitoxin (TA) system. Its cognate toxin is VapC29 (Potential). The sequence is that of Putative antitoxin VapB29 (vapB29) from Mycobacterium tuberculosis (strain CDC 1551 / Oshkosh).